The following is an 81-amino-acid chain: UPF0386 protein Smed_0945 (81 aa).

This sequence belongs to the UPF0386 family.

The chain is UPF0386 protein Smed_0945 from Sinorhizobium medicae (strain WSM419) (Ensifer medicae).